A 272-amino-acid polypeptide reads, in one-letter code: Shikimate dehydrogenase (NADP(+)) (272 aa).

Shikimate contacts are provided by residues 14–16 and Thr61; that span reads SKS. The active-site Proton acceptor is Lys65. Glu77 lines the NADP(+) pocket. Residues Asn86 and Asp102 each coordinate shikimate. NADP(+) is bound by residues 126–130, 149–154, and Met213; these read GAGGA and NRTVSR. Position 215 (Tyr215) interacts with shikimate. Gly237 serves as a coordination point for NADP(+).

This sequence belongs to the shikimate dehydrogenase family. In terms of assembly, homodimer.

It carries out the reaction shikimate + NADP(+) = 3-dehydroshikimate + NADPH + H(+). Its pathway is metabolic intermediate biosynthesis; chorismate biosynthesis; chorismate from D-erythrose 4-phosphate and phosphoenolpyruvate: step 4/7. Involved in the biosynthesis of the chorismate, which leads to the biosynthesis of aromatic amino acids. Catalyzes the reversible NADPH linked reduction of 3-dehydroshikimate (DHSA) to yield shikimate (SA). The chain is Shikimate dehydrogenase (NADP(+)) from Escherichia coli O81 (strain ED1a).